Reading from the N-terminus, the 706-residue chain is Polyribonucleotide nucleotidyltransferase (706 aa).

The Mg(2+) site is built by Asp486 and Asp492. The region spanning 553–612 is the KH domain; that stretch reads PRIYTMKINPEKIKDVIGKGGSVIRALTDETGTTIEIEDDGTIKIAATDGDKAKHAIRRI. Residues 622–690 enclose the S1 motif domain; sequence NRIYAGKVTR…RQGRIRLSMK (69 aa).

Belongs to the polyribonucleotide nucleotidyltransferase family. As to quaternary structure, component of the RNA degradosome, which is a multiprotein complex involved in RNA processing and mRNA degradation. Mg(2+) serves as cofactor.

It localises to the cytoplasm. It carries out the reaction RNA(n+1) + phosphate = RNA(n) + a ribonucleoside 5'-diphosphate. Its function is as follows. Involved in mRNA degradation. Catalyzes the phosphorolysis of single-stranded polyribonucleotides processively in the 3'- to 5'-direction. The protein is Polyribonucleotide nucleotidyltransferase of Yersinia enterocolitica serotype O:8 / biotype 1B (strain NCTC 13174 / 8081).